The primary structure comprises 352 residues: MDYQVSSPIYDINYYTSEPCQKINVKQIAARLLPPLYSLVFIFGFVGNMLVILILINCKRLKSMTDIYLLNLAISDLFFLLTVPFWAHYAAAQWDFGNTMCQLLTGLYFIGFFSGIFFIILLTIDRYLAVVHAVFALKARTVTFGVVTSVITWVVAVFASLPGIIFTRSQKEGLHYTCSSHFPYSQYQFWKNFQTLKIVILGLVLPLLVMVICYSGILKTLLRCRNEKKRHRAVRLIFTIMIVYFLFWAPYNIVLLLNTFQEFFGLNNCSSSNRLDQAMQVTETLGMTHCCINPIIYAFVGEKFRNYLLVFFQKHIAKRFCKCCSIFQQEAPERASSVYTRSTGEQEISVGL.

The Extracellular segment spans residues 1-30 (MDYQVSSPIYDINYYTSEPCQKINVKQIAA). A Sulfotyrosine modification is found at Tyr-3. 2 O-linked (GalNAc...) serine glycosylation sites follow: Ser-6 and Ser-7. Residues Tyr-10, Tyr-14, and Tyr-15 each carry the sulfotyrosine modification. 2 cysteine pairs are disulfide-bonded: Cys-20–Cys-269 and Cys-101–Cys-178. Residues 31 to 58 (RLLPPLYSLVFIFGFVGNMLVILILINC) traverse the membrane as a helical segment. At 59 to 68 (KRLKSMTDIY) the chain is on the cytoplasmic side. The helical transmembrane segment at 69 to 89 (LLNLAISDLFFLLTVPFWAHY) threads the bilayer. The Extracellular segment spans residues 90–102 (AAAQWDFGNTMCQ). A helical transmembrane segment spans residues 103–124 (LLTGLYFIGFFSGIFFIILLTI). Topologically, residues 125–141 (DRYLAVVHAVFALKART) are cytoplasmic. The chain crosses the membrane as a helical span at residues 142 to 166 (VTFGVVTSVITWVVAVFASLPGIIF). The Extracellular portion of the chain corresponds to 167–198 (TRSQKEGLHYTCSSHFPYSQYQFWKNFQTLKI). Residues 199 to 218 (VILGLVLPLLVMVICYSGIL) traverse the membrane as a helical segment. The Cytoplasmic segment spans residues 219–235 (KTLLRCRNEKKRHRAVR). The chain crosses the membrane as a helical span at residues 236 to 260 (LIFTIMIVYFLFWAPYNIVLLLNTF). Topologically, residues 261–277 (QEFFGLNNCSSSNRLDQ) are extracellular. A helical membrane pass occupies residues 278–301 (AMQVTETLGMTHCCINPIIYAFVG). Residues 302 to 352 (EKFRNYLLVFFQKHIAKRFCKCCSIFQQEAPERASSVYTRSTGEQEISVGL) are Cytoplasmic-facing. S-palmitoyl cysteine attachment occurs at residues Cys-321, Cys-323, and Cys-324. Ser-336, Ser-337, Ser-342, and Ser-349 each carry phosphoserine; by BARK1.

It belongs to the G-protein coupled receptor 1 family. In terms of assembly, interacts with PRAF2. Efficient ligand binding to CCL3/MIP-1alpha and CCL4/MIP-1beta requires sulfation, O-glycosylation and sialic acid modifications. Glycosylation on Ser-6 is required for efficient binding of CCL4. Interacts with GRK2. Interacts with ARRB1 and ARRB2. Interacts with CNIH4. Interacts with S100A4; this interaction stimulates T-lymphocyte chemotaxis. As to quaternary structure, (Microbial infection) Interacts with HIV-1 surface protein gp120. (Microbial infection) May interact with human cytomegalovirus/HHV-5 protein UL78. Post-translationally, sulfated on at least 2 of the N-terminal tyrosines. Sulfation contributes to the efficiency of HIV-1 entry and is required for efficient binding of the chemokines, CCL3 and CCL4. O-glycosylated, but not N-glycosylated. Ser-6 appears to be the major site even if Ser-7 may be also O-glycosylated. Also sialylated glycans present which contribute to chemokine binding. Thr-16 and Ser-17 may also be glycosylated and, if so, with small moieties such as a T-antigen. In terms of processing, palmitoylation in the C-terminal is important for cell surface expression, and to a lesser extent, for HIV entry. Post-translationally, phosphorylation on serine residues in the C-terminal is stimulated by binding CC chemokines especially by APO-RANTES. As to expression, highly expressed in spleen, thymus, in the myeloid cell line THP-1, in the promyeloblastic cell line KG-1a and on CD4+ and CD8+ T-cells. Medium levels in peripheral blood leukocytes and in small intestine. Low levels in ovary and lung.

The protein localises to the cell membrane. Receptor for a number of inflammatory CC-chemokines including CCL3/MIP-1-alpha, CCL4/MIP-1-beta and RANTES and subsequently transduces a signal by increasing the intracellular calcium ion level. May play a role in the control of granulocytic lineage proliferation or differentiation. Participates in T-lymphocyte migration to the infection site by acting as a chemotactic receptor. Its function is as follows. (Microbial infection) Acts as a coreceptor (CD4 being the primary receptor) of human immunodeficiency virus-1/HIV-1. The chain is C-C chemokine receptor type 5 from Homo sapiens (Human).